A 1358-amino-acid polypeptide reads, in one-letter code: Phosphoribosylformylglycinamidine synthase (1358 aa).

Threonine 2 carries the N-acetylthreonine modification. The interval 339–363 (AVSPFPGAATGSGGEIRDEGATGRG) is disordered. ATP is bound by residues 345–356 (GAATGSGGEIRD), 424–426 (NGY), and alanine 719. Residues aspartate 720, glutamate 762, asparagine 766, and aspartate 930 each contribute to the Mg(2+) site. Serine 932 provides a ligand contact to ATP. Residues 1093–1358 (VAILREQGVN…LFRSARRWVG (266 aa)) form the Glutamine amidotransferase type-1 domain. Cysteine 1187 serves as the catalytic Nucleophile. Residues histidine 1319 and glutamate 1321 contribute to the active site.

This sequence in the N-terminal section; belongs to the FGAMS family.

The protein resides in the cytoplasm. It carries out the reaction N(2)-formyl-N(1)-(5-phospho-beta-D-ribosyl)glycinamide + L-glutamine + ATP + H2O = 2-formamido-N(1)-(5-O-phospho-beta-D-ribosyl)acetamidine + L-glutamate + ADP + phosphate + H(+). It functions in the pathway purine metabolism; IMP biosynthesis via de novo pathway; 5-amino-1-(5-phospho-D-ribosyl)imidazole from N(2)-formyl-N(1)-(5-phospho-D-ribosyl)glycinamide: step 1/2. Phosphoribosylformylglycinamidine synthase involved in the purines biosynthetic pathway. Catalyzes the ATP-dependent conversion of formylglycinamide ribonucleotide (FGAR) and glutamine to yield formylglycinamidine ribonucleotide (FGAM) and glutamate. This chain is Phosphoribosylformylglycinamidine synthase (ADE6), found in Saccharomyces cerevisiae (strain ATCC 204508 / S288c) (Baker's yeast).